Reading from the N-terminus, the 376-residue chain is Mitochondrial distribution and morphology protein 34 (376 aa).

Positions 1–194 (MSFTFNWPRF…LPGIIHRLSQ (194 aa)) constitute an SMP-LTD domain. 2 disordered regions span residues 207–249 (SKHP…PKIV) and 286–376 (SVPP…LHPS). The segment covering 218 to 230 (EISEPGDYGEEGE) has biased composition (acidic residues). Basic residues predominate over residues 306–318 (VKAKRKRTYRLGG). Basic and acidic residues predominate over residues 350–362 (MDRYFRSYDDHSR).

The protein belongs to the MDM34 family. Component of the ER-mitochondria encounter structure (ERMES) or MDM complex, composed of MMM1, MDM10, MDM12 and MDM34.

Its subcellular location is the mitochondrion outer membrane. Functionally, component of the ERMES/MDM complex, which serves as a molecular tether to connect the endoplasmic reticulum (ER) and mitochondria. Components of this complex are involved in the control of mitochondrial shape and protein biogenesis, and function in nonvesicular lipid trafficking between the ER and mitochondria. MDM34 is required for the interaction of the ER-resident membrane protein MMM1 and the outer mitochondrial membrane-resident beta-barrel protein MDM10. This is Mitochondrial distribution and morphology protein 34 from Laccaria bicolor (strain S238N-H82 / ATCC MYA-4686) (Bicoloured deceiver).